Reading from the N-terminus, the 320-residue chain is Cytochrome f (320 aa).

An N-terminal signal peptide occupies residues 1–35 (MENRNTFSWVKEQMTRSISVSIMIYVITQTSISNA). 4 residues coordinate heme: tyrosine 36, cysteine 56, cysteine 59, and histidine 60. Residues 286-306 (VQGLLFFFASVILAQVFLVLK) form a helical membrane-spanning segment.

Belongs to the cytochrome f family. The 4 large subunits of the cytochrome b6-f complex are cytochrome b6, subunit IV (17 kDa polypeptide, petD), cytochrome f and the Rieske protein, while the 4 small subunits are PetG, PetL, PetM and PetN. The complex functions as a dimer. It depends on heme as a cofactor.

It is found in the plastid. It localises to the chloroplast thylakoid membrane. In terms of biological role, component of the cytochrome b6-f complex, which mediates electron transfer between photosystem II (PSII) and photosystem I (PSI), cyclic electron flow around PSI, and state transitions. The chain is Cytochrome f from Agrostis stolonifera (Creeping bentgrass).